The primary structure comprises 412 residues: Gamma-glutamyl phosphate reductase (412 aa).

The protein belongs to the gamma-glutamyl phosphate reductase family.

It is found in the cytoplasm. The catalysed reaction is L-glutamate 5-semialdehyde + phosphate + NADP(+) = L-glutamyl 5-phosphate + NADPH + H(+). Its pathway is amino-acid biosynthesis; L-proline biosynthesis; L-glutamate 5-semialdehyde from L-glutamate: step 2/2. Catalyzes the NADPH-dependent reduction of L-glutamate 5-phosphate into L-glutamate 5-semialdehyde and phosphate. The product spontaneously undergoes cyclization to form 1-pyrroline-5-carboxylate. This Bartonella bacilliformis (strain ATCC 35685 / KC583 / Herrer 020/F12,63) protein is Gamma-glutamyl phosphate reductase.